We begin with the raw amino-acid sequence, 248 residues long: Ribosomal RNA small subunit methyltransferase J (248 aa).

Residues 98–99 (RD), 114–115 (ER), 150–151 (SS), and aspartate 168 contribute to the S-adenosyl-L-methionine site.

This sequence belongs to the methyltransferase superfamily. RsmJ family.

The protein resides in the cytoplasm. The enzyme catalyses guanosine(1516) in 16S rRNA + S-adenosyl-L-methionine = N(2)-methylguanosine(1516) in 16S rRNA + S-adenosyl-L-homocysteine + H(+). Its function is as follows. Specifically methylates the guanosine in position 1516 of 16S rRNA. The sequence is that of Ribosomal RNA small subunit methyltransferase J from Shewanella baltica (strain OS185).